The primary structure comprises 300 residues: N-acetylmannosamine kinase (300 aa).

Residues Ala-5–Lys-12 and Gly-132–Leu-139 contribute to the ATP site. His-156, Cys-166, Cys-168, and Cys-173 together coordinate Zn(2+).

Belongs to the ROK (NagC/XylR) family. NanK subfamily. In terms of assembly, homodimer.

The catalysed reaction is an N-acyl-D-mannosamine + ATP = an N-acyl-D-mannosamine 6-phosphate + ADP + H(+). Its pathway is amino-sugar metabolism; N-acetylneuraminate degradation; D-fructose 6-phosphate from N-acetylneuraminate: step 2/5. Functionally, catalyzes the phosphorylation of N-acetylmannosamine (ManNAc) to ManNAc-6-P. In Haemophilus influenzae (strain 86-028NP), this protein is N-acetylmannosamine kinase.